Consider the following 745-residue polypeptide: Multiple C2 domain and transmembrane region protein 13 (745 aa).

Residues 1–30 are disordered; the sequence is MAANKDEFSVKQISPKLGGERGARNPYGPT. C2 domains are found at residues 21 to 139, 171 to 293, and 326 to 453; these read RGAR…PQRY, DASE…SAPA, and AEES…ACSY. Ca(2+) is bound by residues aspartate 56, aspartate 61, aspartate 106, and asparagine 110. The next 2 helical transmembrane spans lie at 568-588 and 688-708; these read SLIV…LVGL and FYCW…PMWL.

This sequence belongs to the MCTP family. Ca(2+) serves as cofactor. Expressed in incipient leaf primordia.

It is found in the cell membrane. It localises to the cytoplasm. Its function is as follows. May function as a signaling molecule by regulating the trafficking of other regulators. This chain is Multiple C2 domain and transmembrane region protein 13, found in Arabidopsis thaliana (Mouse-ear cress).